The following is a 268-amino-acid chain: Tryptophan synthase alpha chain (268 aa).

Residues Glu-49 and Asp-60 each act as proton acceptor in the active site.

This sequence belongs to the TrpA family. In terms of assembly, tetramer of two alpha and two beta chains.

The enzyme catalyses (1S,2R)-1-C-(indol-3-yl)glycerol 3-phosphate + L-serine = D-glyceraldehyde 3-phosphate + L-tryptophan + H2O. It participates in amino-acid biosynthesis; L-tryptophan biosynthesis; L-tryptophan from chorismate: step 5/5. Its function is as follows. The alpha subunit is responsible for the aldol cleavage of indoleglycerol phosphate to indole and glyceraldehyde 3-phosphate. The polypeptide is Tryptophan synthase alpha chain (Xanthomonas axonopodis pv. citri (strain 306)).